The primary structure comprises 366 residues: Carbamoyl phosphate synthase small chain (366 aa).

The tract at residues 1 to 168 (MYGILVLEDG…KETVIYNAED (168 aa)) is CPSase. L-glutamine-binding residues include Ser45, Gly220, and Gly222. In terms of domain architecture, Glutamine amidotransferase type-1 spans 172–363 (RCVLIDCGVK…VELGIKFKAE (192 aa)). Cys247 functions as the Nucleophile in the catalytic mechanism. Positions 248, 251, 289, 291, and 292 each coordinate L-glutamine. Catalysis depends on residues His336 and Glu338.

The protein belongs to the CarA family. As to quaternary structure, composed of two chains; the small (or glutamine) chain promotes the hydrolysis of glutamine to ammonia, which is used by the large (or ammonia) chain to synthesize carbamoyl phosphate. Tetramer of heterodimers (alpha,beta)4.

It catalyses the reaction hydrogencarbonate + L-glutamine + 2 ATP + H2O = carbamoyl phosphate + L-glutamate + 2 ADP + phosphate + 2 H(+). The catalysed reaction is L-glutamine + H2O = L-glutamate + NH4(+). The protein operates within amino-acid biosynthesis; L-arginine biosynthesis; carbamoyl phosphate from bicarbonate: step 1/1. It participates in pyrimidine metabolism; UMP biosynthesis via de novo pathway; (S)-dihydroorotate from bicarbonate: step 1/3. Functionally, small subunit of the glutamine-dependent carbamoyl phosphate synthetase (CPSase). CPSase catalyzes the formation of carbamoyl phosphate from the ammonia moiety of glutamine, carbonate, and phosphate donated by ATP, constituting the first step of 2 biosynthetic pathways, one leading to arginine and/or urea and the other to pyrimidine nucleotides. The small subunit (glutamine amidotransferase) binds and cleaves glutamine to supply the large subunit with the substrate ammonia. This is Carbamoyl phosphate synthase small chain from Methanococcus maripaludis (strain C5 / ATCC BAA-1333).